Here is a 494-residue protein sequence, read N- to C-terminus: Potassium voltage-gated channel subfamily A member 2 (494 aa).

Residues 1 to 25 (MTVATGDPSDEAAAHPGNPAEYDPD) form a disordered region. The tract at residues 1 to 124 (MTVATGDPSD…YELGDEAIEL (124 aa)) is tetramerization domain. At 1–159 (MTVATGDPSD…LLFEYPESSG (159 aa)) the chain is on the cytoplasmic side. Residues 160-181 (PARIIAIISVMVILISIVSFCL) traverse the membrane as a helical segment. Residues 182–216 (ETLPIFRNDDDEPHSVFDTNTNTTIYFTSTYFTDP) lie on the Extracellular side of the membrane. The N-linked (GlcNAc...) asparagine glycan is linked to Asn-203. Residues 217-238 (FFILETLCIIWFSFEFLVRLFA) traverse the membrane as a helical segment. Residue Cys-239 is the site of S-palmitoyl cysteine attachment. At 239–249 (CPSKSGFFGNV) the chain is on the cytoplasmic side. A helical membrane pass occupies residues 250 to 270 (MNIIDVVAIIPYFITLATELA). The Extracellular segment spans residues 271 to 284 (EKPEDGQAGQQAMS). Residues 285-305 (LAILRVIRLVRVFRIFKLSRH) form a helical; Voltage-sensor membrane-spanning segment. The Cytoplasmic segment spans residues 306 to 320 (SKGLQILGQTLKASM). The tract at residues 307-320 (KGLQILGQTLKASM) is S4-S5 linker. A helical membrane pass occupies residues 321–342 (RELGLLIFFLFIGVILFSSAVY). Residues 343-356 (FAEADEPESQFESI) are Extracellular-facing. An intramembrane region (helical) is located at residues 357–368 (PDAFWWAVVSMT). Residues 369–374 (TVGYGD) carry the Selectivity filter motif. The stretch at 369-376 (TVGYGDMV) is an intramembrane region. Residues 377 to 383 (PTTIGGK) lie on the Extracellular side of the membrane. A helical transmembrane segment spans residues 384–412 (IVGSLCAIAGVLTIALPVPVIVSNFNYFY). Topologically, residues 413–494 (HRETEGEEQA…VNITKMLTDV (82 aa)) are cytoplasmic. Positions 492–494 (TDV) match the PDZ-binding motif.

This sequence belongs to the potassium channel family. A (Shaker) (TC 1.A.1.2) subfamily. Kv1.2/KCNA2 sub-subfamily. In terms of assembly, homotetramer and heterotetramer with other family members. In terms of tissue distribution, expressed in oligodendrocytes.

It localises to the cell membrane. The catalysed reaction is K(+)(in) = K(+)(out). In terms of biological role, voltage-gated potassium channel that mediates transmembrane potassium transport in excitable membranes, primarily in the brain and central nervous system. Prevents aberrant action potential firing and regulates neuronal output. Forms tetrameric potassium-selective channels through which potassium ions pass in accordance with their electrochemical gradient. The channel alternates between opened and closed conformations in response to the voltage difference across the membrane. Can form functional homotetrameric channels and heterotetrameric channels with other family members; the channels characteristics depend critically on the types of channel-forming alpha subunits that are present. Channel properties are modulated by cytoplasmic beta subunits that regulate the subcellular location of the alpha subunits. In vivo, membranes probably contain a mixture of heteromeric potassium channel complexes, making it difficult to assign currents observed in intact tissues to any particular potassium channel family member. Homotetrameric KCNA2 forms a delayed-rectifier potassium channel that opens in response to membrane depolarization, followed by slow spontaneous channel closure. Regulates neuronal excitability and plays a role as pacemaker in the regulation of neuronal action potentials. KCNA2-containing channels play a presynaptic role and prevent hyperexcitability and aberrant action potential firing. Response to toxins that are selective for KCNA2-containing potassium channels suggests that in Purkinje cells, dendritic subthreshold KCNA2-containing potassium channels prevent random spontaneous calcium spikes, suppressing dendritic hyperexcitability without hindering the generation of somatic action potentials, and thereby play an important role in motor coordination. Plays a role in the induction of long-term potentiation of neuron excitability in the CA3 layer of the hippocampus. This chain is Potassium voltage-gated channel subfamily A member 2 (kcna2), found in Oncorhynchus mykiss (Rainbow trout).